A 352-amino-acid polypeptide reads, in one-letter code: Molybdenum import ATP-binding protein ModC (352 aa).

In terms of domain architecture, ABC transporter spans 2–230 (MLEINVKKRL…PLFEPWQEQG (229 aa)). ATP is bound at residue 32–39 (GISGSGKS). Residues 290-352 (KTSIRNILSG…YAQIKAVSVM (63 aa)) form the Mop domain.

This sequence belongs to the ABC transporter superfamily. Molybdate importer (TC 3.A.1.8) family. As to quaternary structure, the complex is composed of two ATP-binding proteins (ModC), two transmembrane proteins (ModB) and a solute-binding protein (ModA).

The protein localises to the cell inner membrane. It carries out the reaction molybdate(out) + ATP + H2O = molybdate(in) + ADP + phosphate + H(+). Its function is as follows. Part of the ABC transporter complex ModABC involved in molybdenum import. Responsible for energy coupling to the transport system. The chain is Molybdenum import ATP-binding protein ModC from Mannheimia succiniciproducens (strain KCTC 0769BP / MBEL55E).